A 452-amino-acid chain; its full sequence is Probable ECA polymerase (452 aa).

The next 11 membrane-spanning stretches (helical) occupy residues 6–26 (FSGL…LTWF), 37–57 (VFFS…TSVL), 63–83 (VGVA…CFYG), 118–138 (VILM…NGFL), 155–175 (GVAL…VYFL), 181–201 (AWLF…MIVG), 207–227 (IIIA…ISLW), 228–248 (MLAA…LKRY), 341–361 (LVVM…GLII), 378–398 (YKAA…IVLA), and 410–430 (VFFL…FWLF).

The protein belongs to the WzyE family. As to quaternary structure, probably part of a complex composed of WzxE, WzyE and WzzE.

It is found in the cell inner membrane. It participates in bacterial outer membrane biogenesis; enterobacterial common antigen biosynthesis. Its function is as follows. Probably involved in the polymerization of enterobacterial common antigen (ECA) trisaccharide repeat units. This is Probable ECA polymerase from Salmonella arizonae (strain ATCC BAA-731 / CDC346-86 / RSK2980).